The primary structure comprises 374 residues: tRNA-specific 2-thiouridylase MnmA (374 aa).

Residues 12–19 (GMSGGVDS) and methionine 38 contribute to the ATP site. Positions 98 to 100 (NPD) are interaction with target base in tRNA. Cysteine 103 (nucleophile) is an active-site residue. Cysteine 103 and cysteine 202 form a disulfide bridge. An ATP-binding site is contributed by glycine 128. The interval 152 to 154 (KDQ) is interaction with tRNA. The active-site Cysteine persulfide intermediate is cysteine 202. The tract at residues 316–317 (RY) is interaction with tRNA.

The protein belongs to the MnmA/TRMU family.

It is found in the cytoplasm. It carries out the reaction S-sulfanyl-L-cysteinyl-[protein] + uridine(34) in tRNA + AH2 + ATP = 2-thiouridine(34) in tRNA + L-cysteinyl-[protein] + A + AMP + diphosphate + H(+). In terms of biological role, catalyzes the 2-thiolation of uridine at the wobble position (U34) of tRNA, leading to the formation of s(2)U34. The sequence is that of tRNA-specific 2-thiouridylase MnmA from Vibrio vulnificus (strain YJ016).